The chain runs to 324 residues: Homocysteine S-methyltransferase 1 (324 aa).

In terms of domain architecture, Hcy-binding spans 6–320; that stretch reads IKELIVEHPG…KDIAEIASAV (315 aa). The Zn(2+) site is built by cysteine 238, cysteine 305, and cysteine 306.

Requires Zn(2+) as cofactor.

The protein localises to the cytoplasm. It carries out the reaction S-methyl-L-methionine + L-homocysteine = 2 L-methionine + H(+). Homocysteine S-methyltransferase involved in the conversion of S-adenosylmethionine (AdoMet) to methionine to control the methionine/AdoMet ratio. Also converts S-methylmethionine (SMM) to methionine. The protein is Homocysteine S-methyltransferase 1 (MHT1) of Saccharomyces cerevisiae (strain ATCC 204508 / S288c) (Baker's yeast).